We begin with the raw amino-acid sequence, 321 residues long: uncharacterized protein (321 aa).

Helical transmembrane passes span 10–28 (LWCSFGVFLIIIIIIEMSI), 41–63 (IALYSSCISMLTAILFDVLIWIY), 94–111 (NVAMWFFLFQLFSISMVH), 116–138 (LFYGTFLALVFRSSIIFFGVWLL), 143–165 (FLFYVLSIILLFTGIITILSNGV), 200–222 (NGVIVATPLFLVLILIELNDIIF), 237–259 (PFIIITSSFFSIIGLRSIYVILA), 266–283 (YIIKYGITLILIFISIKI), and 293–315 (IMLSSFFIVCILVACFIIEKFFF).

This sequence belongs to the TerC family.

Its subcellular location is the cell membrane. This is an uncharacterized protein from Buchnera aphidicola subsp. Baizongia pistaciae (strain Bp).